Here is a 122-residue protein sequence, read N- to C-terminus: Large ribosomal subunit protein uL14 (122 aa).

Belongs to the universal ribosomal protein uL14 family. As to quaternary structure, part of the 50S ribosomal subunit. Forms a cluster with proteins L3 and L19. In the 70S ribosome, L14 and L19 interact and together make contacts with the 16S rRNA in bridges B5 and B8.

Functionally, binds to 23S rRNA. Forms part of two intersubunit bridges in the 70S ribosome. The chain is Large ribosomal subunit protein uL14 from Caulobacter vibrioides (strain ATCC 19089 / CIP 103742 / CB 15) (Caulobacter crescentus).